We begin with the raw amino-acid sequence, 177 residues long: dCTP deaminase, dUMP-forming (177 aa).

DCTP contacts are provided by residues 98–103 (RSSVGR), Asn-110, 115–118 (DPGF), 123–125 (TLE), Gln-144, 157–160 (YQGK), and Gln-164. Residue Glu-125 is the Proton donor/acceptor of the active site.

The protein belongs to the dCTP deaminase family. In terms of assembly, homotrimer. Requires Mg(2+) as cofactor.

It catalyses the reaction dCTP + 2 H2O = dUMP + NH4(+) + diphosphate. It participates in pyrimidine metabolism; dUMP biosynthesis; dUMP from dCTP: step 1/1. With respect to regulation, inhibited by dTTP. Bifunctional enzyme that catalyzes both the deamination of dCTP to dUTP and the hydrolysis of dUTP to dUMP without releasing the toxic dUTP intermediate. This Halalkalibacterium halodurans (strain ATCC BAA-125 / DSM 18197 / FERM 7344 / JCM 9153 / C-125) (Bacillus halodurans) protein is dCTP deaminase, dUMP-forming.